The chain runs to 213 residues: MQAYQKDFIQLALKAQALKFGEFTLKSGRVSPYFFNAGQFQTGSALASLGRFYAQALVDAGVEFDMIFGPAYKGIPLATTTATALADHHQKDMPFAYNRKEVKAHGEGGTLVGAPIKGRVAIIDDVITAGTAVREVLSLIDAAGAKPAAIVVGLNRQEKGQGELSAIQELEQETGVPVISIINLNHVLQYLETQGDSENLAKVTAYRQQYGVE.

Residue Lys26 participates in 5-phospho-alpha-D-ribose 1-diphosphate binding. 34–35 provides a ligand contact to orotate; it reads FF. 5-phospho-alpha-D-ribose 1-diphosphate-binding positions include 72-73, Arg99, Lys100, Lys103, His105, and 124-132; these read YK and DDVITAGTA. The orotate site is built by Thr128 and Arg156.

This sequence belongs to the purine/pyrimidine phosphoribosyltransferase family. PyrE subfamily. In terms of assembly, homodimer. It depends on Mg(2+) as a cofactor.

The catalysed reaction is orotidine 5'-phosphate + diphosphate = orotate + 5-phospho-alpha-D-ribose 1-diphosphate. It participates in pyrimidine metabolism; UMP biosynthesis via de novo pathway; UMP from orotate: step 1/2. Catalyzes the transfer of a ribosyl phosphate group from 5-phosphoribose 1-diphosphate to orotate, leading to the formation of orotidine monophosphate (OMP). The sequence is that of Orotate phosphoribosyltransferase from Saccharophagus degradans (strain 2-40 / ATCC 43961 / DSM 17024).